The chain runs to 134 residues: ATP synthase epsilon chain (134 aa).

This sequence belongs to the ATPase epsilon chain family. In terms of assembly, F-type ATPases have 2 components, CF(1) - the catalytic core - and CF(0) - the membrane proton channel. CF(1) has five subunits: alpha(3), beta(3), gamma(1), delta(1), epsilon(1). CF(0) has three main subunits: a, b and c.

It is found in the cell inner membrane. Its function is as follows. Produces ATP from ADP in the presence of a proton gradient across the membrane. The protein is ATP synthase epsilon chain of Sinorhizobium fredii (strain NBRC 101917 / NGR234).